We begin with the raw amino-acid sequence, 353 residues long: T-complex protein 1 subunit eta (353 aa).

The protein belongs to the TCP-1 chaperonin family. Heterooligomeric complex of about 850 to 900 kDa that forms two stacked rings, 12 to 16 nm in diameter.

The protein resides in the cytoplasm. Its function is as follows. Molecular chaperone; assists the folding of proteins upon ATP hydrolysis. Known to play a role, in vitro, in the folding of actin and tubulin. This is T-complex protein 1 subunit eta from Tetrahymena thermophila.